A 433-amino-acid polypeptide reads, in one-letter code: PHO85 cyclin-10 (433 aa).

Residues 1–10 (MDMTKNHTTD) show a composition bias toward basic and acidic residues. 2 disordered regions span residues 1 to 20 (MDMTKNHTTDTEEFDDGDIR) and 51 to 81 (LTSEWDQSRSNTPGLAEGKTEKAQPCGTTDS). Residues 51 to 63 (LTSEWDQSRSNTP) show a composition bias toward polar residues.

It belongs to the cyclin family. PHO80 subfamily. As to quaternary structure, forms a cyclin-CDK complex with PHO85. Interacts with GSY2, independent of the presence of PHO85.

The protein localises to the cytoplasm. Its function is as follows. Cyclin partner of the cyclin-dependent kinase (CDK) PHO85. Together with cyclin PCL8, negatively controls glycogen accumulation under favorable growth conditions. The PCL10-PHO85 cyclin-CDK holoenzyme has glycogen synthase kinase activity and phosphorylates and negatively regulates glycogen synthase GSY2. Also has minor GLC8 kinase activity. In Saccharomyces cerevisiae (strain ATCC 204508 / S288c) (Baker's yeast), this protein is PHO85 cyclin-10 (PCL10).